Consider the following 242-residue polypeptide: MKILIPTAKEMNTDLPSIEATPLKPESQAVLDALALYSASQLESFYKVSAEKATEEFQNIQALKRQTAQHYPALKLFDGLMYRNIKRDKLTEAEQDYLENHVFITSALYGVVPALSPMAPHRLDFLMKLKVAGKTLKSHWKAVYDEALKKEEVIFSLLSSEFETVFSKEIRAKMVTFKFMEDRGGQLKIHSTISKKARGAFLTALIENQVQTVGEARRLNFAGFVYREDLSQPQGLVFVKEV.

It belongs to the UPF0246 family.

This Streptococcus pneumoniae (strain CGSP14) protein is UPF0246 protein SPCG_1533.